The sequence spans 373 residues: Citrate synthase (373 aa).

Residues His262 and Asp314 contribute to the active site.

Belongs to the citrate synthase family. In terms of assembly, homohexamer.

It catalyses the reaction oxaloacetate + acetyl-CoA + H2O = citrate + CoA + H(+). Its pathway is carbohydrate metabolism; tricarboxylic acid cycle; isocitrate from oxaloacetate: step 1/2. This is Citrate synthase (ctsA) from Heyndrickxia coagulans (Weizmannia coagulans).